The sequence spans 166 residues: Urease accessory protein UreE (166 aa).

The disordered stretch occupies residues 132–156 (FQPEHGAYGGGHHHSRHGDEDFNYP).

This sequence belongs to the UreE family.

The protein localises to the cytoplasm. In terms of biological role, involved in urease metallocenter assembly. Binds nickel. Probably functions as a nickel donor during metallocenter assembly. In Pseudomonas fluorescens (strain ATCC BAA-477 / NRRL B-23932 / Pf-5), this protein is Urease accessory protein UreE.